We begin with the raw amino-acid sequence, 121 residues long: MPTEETEPPVTAFMLVKTTPEWLALTVQERVDAFTTQVLPAIEARTSGVRSRFYDTEFYSARVTDVWVWEAEDHHAYQLLIDALRETPFWDRYFEVVDLLVGTENGYARTYGLEPVATITT.

Belongs to the darcynin family.

This chain is Darcynin homolog, found in Streptomyces avermitilis (strain ATCC 31267 / DSM 46492 / JCM 5070 / NBRC 14893 / NCIMB 12804 / NRRL 8165 / MA-4680).